We begin with the raw amino-acid sequence, 192 residues long: Ion-translocating oxidoreductase complex subunit A (192 aa).

Transmembrane regions (helical) follow at residues 5–25 (LLLL…FLGL), 39–59 (IGMS…SYLV), 72–92 (LRTM…EMLV), 102–122 (ALGI…VALL), 134–154 (AIYG…FSAM), and 171–191 (AIAM…TGLV).

It belongs to the NqrDE/RnfAE family. As to quaternary structure, the complex is composed of six subunits: RnfA, RnfB, RnfC, RnfD, RnfE and RnfG.

The protein localises to the cell inner membrane. Its function is as follows. Part of a membrane-bound complex that couples electron transfer with translocation of ions across the membrane. The sequence is that of Ion-translocating oxidoreductase complex subunit A from Shewanella loihica (strain ATCC BAA-1088 / PV-4).